The following is a 2162-amino-acid chain: Polyketide synthase 1 (2162 aa).

The interval 19–264 (FVFGDQTSCN…TPLAVHAPYH (246 aa)) is N-terminal acylcarrier protein transacylase domain (SAT). The Ketosynthase family 3 (KS3) domain occupies 397–841 (DSKIAIIGMS…GGNTALLVED (445 aa)). Catalysis depends on for beta-ketoacyl synthase activity residues cysteine 578, histidine 713, and histidine 757. A malonyl-CoA:ACP transacylase (MAT) domain region spans residues 941–1245 (AFVFSGQGSQ…PSLMRSHDGW (305 aa)). Serine 1030 acts as the For acyl/malonyl transferase activity in catalysis. The product template (PT) domain stretch occupies residues 1322–1636 (TASVHRIVRE…RRVLDAAMPA (315 aa)). Positions 1326-1459 (HRIVRESVDR…SSLCFGESRA (134 aa)) are N-terminal hotdog fold. In terms of domain architecture, PKS/mFAS DH spans 1326–1631 (HRIVRESVDR…FQGVPRRVLD (306 aa)). The Proton acceptor; for dehydratase activity role is filled by histidine 1358. The segment at 1486–1631 (LNSRLSSGVI…FQGVPRRVLD (146 aa)) is C-terminal hotdog fold. Aspartate 1545 functions as the Proton donor; for dehydratase activity in the catalytic mechanism. The tract at residues 1633–1669 (AMPAPKSPNKTRDHASPNATISRAKPPQGSSPASSAQ) is disordered. Over residues 1658–1669 (PPQGSSPASSAQ) the composition is skewed to low complexity. In terms of domain architecture, Carrier 1 spans 1692-1766 (IDPMHAVLRI…DFAVHLGLDT (75 aa)). The residue at position 1726 (serine 1726) is an O-(pantetheine 4'-phosphoryl)serine. Low complexity predominate over residues 1772 to 1783 (SSGESNVSGGVS). The disordered stretch occupies residues 1772-1809 (SSGESNVSGGVSPRSDSVAAMSSDVTTPPAQSPLGSMS). Polar residues predominate over residues 1794-1809 (SDVTTPPAQSPLGSMS). The Carrier 2 domain occupies 1807–1884 (SMSSSPCEDL…SFKHVFEQEI (78 aa)). The residue at position 1844 (serine 1844) is an O-(pantetheine 4'-phosphoryl)serine. The thioesterase (TE) domain stretch occupies residues 1896–2160 (LKKYHATSTL…ERVAAFIRSA (265 aa)). The active-site For thioesterase activity is serine 1987.

Its function is as follows. Polyketide synthase; part of the Pks1 gene cluster that mediates the biosynthesis of an anthraquinone derivative pigment that contributes to conidial pigmentation that provides protection from UV radiation, heat and cold stress. The polyketide synthase Pks1 produces 1-acetyl-2,4,6,8-tetrahydroxy-9,10-anthraquinone though condensation of acetyl-CoA with malonyl-CoA. The dehydratase EthD and the laccase Mlac1 further convert the anthraquinone derivative into the final conidial pigment. The chain is Polyketide synthase 1 from Metarhizium album (strain ARSEF 1941).